Here is a 1043-residue protein sequence, read N- to C-terminus: Calcium-transporting ATPase 1, plasma membrane-type (1043 aa).

Over 1–178 the chain is Cytoplasmic; it reads MSFIRKKSME…FLWDASQDMT (178 aa). Transmembrane regions (helical) follow at residues 179-199 and 202-222; these read LLLL…TEGW and GMYD…ITAA. Over 223–258 the chain is Cytoplasmic; sequence SDYKQSLQFRDLDKEKKKIDVQVTRDGYRQKVSIYD. The next 2 helical transmembrane spans lie at 259–279 and 356–376; these read IVVG…DGLF and VATI…TVLM. The Cytoplasmic segment spans residues 377–395; sequence ARFLLGKAGAPGGLLRWRM. Residues 396–416 traverse the membrane as a helical segment; it reads VDALAVLNFFAVAVTIIVVAV. The 4-aspartylphosphate intermediate role is filled by D460. Residues D761 and D765 each coordinate Mg(2+). The helical transmembrane segment at 824 to 844 threads the bilayer; sequence LTVNVVALMVNFISASFTGSA. A topological domain (cytoplasmic) is located at residue P845. 2 helical membrane passes run 846–866 and 891–911; these read LTIV…ALAL and VMWR…GVLL. Over 912–955 the chain is Cytoplasmic; that stretch reads LRGKSLLQINGPQADSLLNTFVFNTFVFCQVFNEVNSREMEKIN. 2 helical membrane-spanning segments follow: residues 956-976 and 998-1018; these read VFSG…TAGF and WLTS…LKCI. The Cytoplasmic portion of the chain corresponds to 1019 to 1043; that stretch reads PVESGSDASDRHDGYRPIPTGPSAV. Positions 1023–1043 are disordered; that stretch reads GSDASDRHDGYRPIPTGPSAV.

This sequence belongs to the cation transport ATPase (P-type) (TC 3.A.3) family. Type IIB subfamily.

The protein resides in the membrane. It carries out the reaction Ca(2+)(in) + ATP + H2O = Ca(2+)(out) + ADP + phosphate + H(+). Activated by calmodulin. In terms of biological role, this magnesium-dependent enzyme catalyzes the hydrolysis of ATP coupled with the translocation of calcium from the cytosol out of the cell, into the endoplasmic reticulum, or into organelles. The sequence is that of Calcium-transporting ATPase 1, plasma membrane-type from Oryza sativa subsp. japonica (Rice).